We begin with the raw amino-acid sequence, 582 residues long: Kelch-like protein diablo (582 aa).

Residues 1–22 (MGDVLISDRPPSPARLSHTSEK) form a disordered region. In terms of domain architecture, BTB spans 41-108 (CDVVINVSGR…CYTSHIVVEE (68 aa)). Residues 143–245 (CLGIRAFADT…SPKFLVGTVG (103 aa)) enclose the BACK domain. Kelch repeat units follow at residues 292–338 (VLFA…VLND), 340–386 (LYAV…VLDG), 387–433 (FLYA…VLGG), 435–480 (LYAI…VFNN), 482–527 (IYAV…VVNG), and 528–574 (QLYA…VMRA).

Its pathway is protein modification; protein ubiquitination. Functionally, probable substrate-specific adapter of an E3 ubiquitin-protein ligase complex which mediates the ubiquitination and subsequent proteasomal degradation of target proteins. May have a role in synapse differentiation and growth. This Culex quinquefasciatus (Southern house mosquito) protein is Kelch-like protein diablo.